Here is a 379-residue protein sequence, read N- to C-terminus: Queuine tRNA-ribosyltransferase (379 aa).

Asp-94 functions as the Proton acceptor in the catalytic mechanism. Residues 94 to 98, Asp-148, Gln-191, and Gly-218 each bind substrate; that span reads DSGGF. Positions 249–255 are RNA binding; it reads GVGSPDS. Residue Asp-268 is the Nucleophile of the active site. Residues 273-277 are RNA binding; important for wobble base 34 recognition; it reads TRIAR. Residues Cys-306, Cys-308, Cys-311, and His-337 each contribute to the Zn(2+) site.

It belongs to the queuine tRNA-ribosyltransferase family. As to quaternary structure, homodimer. Within each dimer, one monomer is responsible for RNA recognition and catalysis, while the other monomer binds to the replacement base PreQ1. The cofactor is Zn(2+).

It catalyses the reaction 7-aminomethyl-7-carbaguanine + guanosine(34) in tRNA = 7-aminomethyl-7-carbaguanosine(34) in tRNA + guanine. It participates in tRNA modification; tRNA-queuosine biosynthesis. In terms of biological role, catalyzes the base-exchange of a guanine (G) residue with the queuine precursor 7-aminomethyl-7-deazaguanine (PreQ1) at position 34 (anticodon wobble position) in tRNAs with GU(N) anticodons (tRNA-Asp, -Asn, -His and -Tyr). Catalysis occurs through a double-displacement mechanism. The nucleophile active site attacks the C1' of nucleotide 34 to detach the guanine base from the RNA, forming a covalent enzyme-RNA intermediate. The proton acceptor active site deprotonates the incoming PreQ1, allowing a nucleophilic attack on the C1' of the ribose to form the product. After dissociation, two additional enzymatic reactions on the tRNA convert PreQ1 to queuine (Q), resulting in the hypermodified nucleoside queuosine (7-(((4,5-cis-dihydroxy-2-cyclopenten-1-yl)amino)methyl)-7-deazaguanosine). The polypeptide is Queuine tRNA-ribosyltransferase (Listeria innocua serovar 6a (strain ATCC BAA-680 / CLIP 11262)).